Reading from the N-terminus, the 488-residue chain is Catalase (488 aa).

Positions 1–26 are disordered; that stretch reads MTDRKNLTTNQGVPVGDNQNSMTAGR. Polar residues predominate over residues 7 to 23; that stretch reads LTTNQGVPVGDNQNSMT. Residues H55 and N128 contribute to the active site. Y338 serves as a coordination point for heme.

This sequence belongs to the catalase family. Heme serves as cofactor.

The protein localises to the cytoplasm. It carries out the reaction 2 H2O2 = O2 + 2 H2O. Functionally, decomposes hydrogen peroxide into water and oxygen; serves to protect cells from the toxic effects of hydrogen peroxide. This Listeria monocytogenes serovar 1/2a (strain ATCC BAA-679 / EGD-e) protein is Catalase (kat).